A 344-amino-acid polypeptide reads, in one-letter code: Dihydroorotate dehydrogenase (quinone) (344 aa).

Residues 62–66 (AGLDK) and Thr86 contribute to the FMN site. Lys66 lines the substrate pocket. 111-115 (NRMGF) lines the substrate pocket. Positions 139 and 172 each coordinate FMN. Residue Asn172 participates in substrate binding. The Nucleophile role is filled by Ser175. A substrate-binding site is contributed by Asn177. Residues Lys217 and Thr245 each coordinate FMN. 246–247 (NT) serves as a coordination point for substrate. FMN is bound by residues Gly268, Gly297, and 318-319 (YS).

This sequence belongs to the dihydroorotate dehydrogenase family. Type 2 subfamily. In terms of assembly, monomer. It depends on FMN as a cofactor.

The protein localises to the cell membrane. It catalyses the reaction (S)-dihydroorotate + a quinone = orotate + a quinol. It participates in pyrimidine metabolism; UMP biosynthesis via de novo pathway; orotate from (S)-dihydroorotate (quinone route): step 1/1. Functionally, catalyzes the conversion of dihydroorotate to orotate with quinone as electron acceptor. In Chromobacterium violaceum (strain ATCC 12472 / DSM 30191 / JCM 1249 / CCUG 213 / NBRC 12614 / NCIMB 9131 / NCTC 9757 / MK), this protein is Dihydroorotate dehydrogenase (quinone).